The following is a 327-amino-acid chain: uncharacterized protein (327 aa).

Residues 1 to 19 (MSIAQDRGIVFKLLSIYRA) are Cytoplasmic-facing. A helical membrane pass occupies residues 20-40 (AAGIFMALAQLIVIFFGYCDF). The Extracellular segment spans residues 41–51 (KIKGYRIASYN). Residues 52 to 72 (APTFASSFIILAVCLLLVVVL) form a helical membrane-spanning segment. Over 73-104 (ENPEVKVTNSENSLFSALKQFFRVERKKLISC) the chain is Cytoplasmic. A helical transmembrane segment spans residues 105-125 (LILLWSMFLSSFIMSEVVYFM). The Extracellular portion of the chain corresponds to 126-141 (PLFLTLHVNWDTKFQG). A helical transmembrane segment spans residues 142–162 (IAFMVASILGVTGSYFAPKLI). The Cytoplasmic portion of the chain corresponds to 163–199 (NVGCSCGRAKDGGLEESDTTGSETVEVKKKDSLYSGQ). A helical transmembrane segment spans residues 200-220 (VFLSIFALFVSLLGQAFMIGA). Residues 221-235 (SEALKHKSMPPTNSG) lie on the Extracellular side of the membrane. A helical transmembrane segment spans residues 236–256 (IFFSAGMSITLLGYNFLASSI). Residues 257–275 (PALFSMYIDPKLKVQLMPS) are Cytoplasmic-facing. Residues 276 to 296 (IGAISGIGKLVAPIVLAALYG) form a helical membrane-spanning segment. Over 297–300 (TRLG) the chain is Extracellular. The chain crosses the membrane as a helical span at residues 301–321 (LSIAVGFGMILVAVSIPPLIW). The Cytoplasmic segment spans residues 322–327 (LRKKRC).

It localises to the membrane. This is an uncharacterized protein from Saccharomyces cerevisiae (strain ATCC 204508 / S288c) (Baker's yeast).